Consider the following 1496-residue polypeptide: Synaptojanin-2 (1496 aa).

The region spanning 120–444 (LKKILSSGVF…GHGLSKVFTG (325 aa)) is the SAC domain. The 80-residue stretch at 906–985 (DATVIVNLQS…RAVKIRPKTK (80 aa)) folds into the RRM domain. Disordered regions lie at residues 1047 to 1083 (VVSD…HPTY), 1100 to 1149 (GNFR…GTHG), 1205 to 1357 (VPES…LQVL), 1393 to 1413 (SSAI…AASF), 1442 to 1461 (EPLD…SAQV), and 1468 to 1496 (RGLP…TLGV). Over residues 1063–1074 (SASTPASKSPAL) the composition is skewed to low complexity. The segment covering 1116 to 1130 (RPRPPHPPQRPPPPT) has biased composition (pro residues). Ser-1139 is subject to Phosphoserine. Residues 1139-1149 (SDASISSGTHG) are compositionally biased toward polar residues. 2 stretches are compositionally biased toward pro residues: residues 1230–1239 (PVLPRRPVPR) and 1279–1292 (TPPP…PVPK). Residues 1324–1338 (ELSSPEAPEAPSLAP) show a composition bias toward low complexity. Composition is skewed to basic and acidic residues over residues 1470-1480 (LPPDHGGKDFS) and 1487-1496 (NKDKRTTLGV).

The protein belongs to the synaptojanin family. It in the central section; belongs to the inositol 1,4,5-trisphosphate 5-phosphatase family. In terms of assembly, binds to GRB2. Isoform 2A binds to SYNJ2BP/OMP25. In terms of tissue distribution, widely expressed. Isoforms 2B1 and 2B2 are concentrated at nerve terminals in brain and at spermatid manchette in testis.

The protein resides in the cytoplasm. The protein localises to the cell membrane. It localises to the presynapse. Its subcellular location is the cytoskeleton. It is found in the membrane raft. The protein resides in the mitochondrion. The enzyme catalyses a 1,2-diacyl-sn-glycero-3-phospho-(1D-myo-inositol-4,5-bisphosphate) + H2O = a 1,2-diacyl-sn-glycero-3-phospho-(1D-myo-inositol 4-phosphate) + phosphate. Functionally, inositol 5-phosphatase which may be involved in distinct membrane trafficking and signal transduction pathways. May mediate the inhibitory effect of Rac1 on endocytosis. This chain is Synaptojanin-2 (Synj2), found in Rattus norvegicus (Rat).